The sequence spans 275 residues: Shikimate dehydrogenase (NADP(+)) (275 aa).

Shikimate contacts are provided by residues 15–17 (SKS) and T62. The Proton acceptor role is filled by K66. E78 lines the NADP(+) pocket. Shikimate is bound by residues N87 and D102. Residues 128–132 (GAGGA), 151–156 (NRTAEK), and L218 each bind NADP(+). Shikimate is bound at residue Y220. G241 provides a ligand contact to NADP(+).

The protein belongs to the shikimate dehydrogenase family. In terms of assembly, homodimer.

It catalyses the reaction shikimate + NADP(+) = 3-dehydroshikimate + NADPH + H(+). Its pathway is metabolic intermediate biosynthesis; chorismate biosynthesis; chorismate from D-erythrose 4-phosphate and phosphoenolpyruvate: step 4/7. Involved in the biosynthesis of the chorismate, which leads to the biosynthesis of aromatic amino acids. Catalyzes the reversible NADPH linked reduction of 3-dehydroshikimate (DHSA) to yield shikimate (SA). In Shouchella clausii (strain KSM-K16) (Alkalihalobacillus clausii), this protein is Shikimate dehydrogenase (NADP(+)).